The primary structure comprises 100 residues: Enhancer of yellow 2 transcription factor (100 aa).

The protein belongs to the ENY2 family. Component of the nuclear pore complex (NPC)-associated AMEX complex (anchoring and mRNA export complex), composed of at least e(y)2 and xmas-2. Component of the SAGA transcription coactivator-HAT complexes, at least composed of Ada2b, e(y)2, Pcaf/Gcn5, Taf10 and Nipped-A/Trrap. Within the SAGA complex, e(y)2, Sgf11, and not/nonstop form an additional subcomplex of SAGA called the DUB module (deubiquitination module). Component of the THO complex, composed of at least e(y)2, HPR1, THO2, THOC5, THOC6 and THOC7. Interacts with e(y)1. Interacts with su(Hw) (via zinc fingers). Interacts with xmas-2; required for localization to the nuclear periphery. Interacts with the nuclear pore complex (NPC).

The protein localises to the nucleus. The protein resides in the nucleoplasm. Its subcellular location is the cytoplasm. Its function is as follows. Involved in mRNA export coupled transcription activation by association with both the AMEX and the SAGA complexes. The SAGA complex is a multiprotein complex that activates transcription by remodeling chromatin and mediating histone acetylation and deubiquitination. Within the SAGA complex, participates in a subcomplex that specifically deubiquitinates histone H2B. The SAGA complex is recruited to specific gene promoters by activators, where it is required for transcription. Required for nuclear receptor-mediated transactivation. Involved in transcription elongation by recruiting the THO complex onto nascent mRNA. The AMEX complex functions in docking export-competent ribonucleoprotein particles (mRNPs) to the nuclear entrance of the nuclear pore complex (nuclear basket). AMEX participates in mRNA export and accurate chromatin positioning in the nucleus by tethering genes to the nuclear periphery. The chain is Enhancer of yellow 2 transcription factor from Drosophila ananassae (Fruit fly).